Reading from the N-terminus, the 348-residue chain is Protein pof5 (348 aa).

To yeast YDR306C. In terms of assembly, interacts with skp1.

It localises to the mitochondrion. This is Protein pof5 (pof5) from Schizosaccharomyces pombe (strain 972 / ATCC 24843) (Fission yeast).